The sequence spans 395 residues: Cuticlin-5 (395 aa).

Residues 1–18 form the signal peptide; the sequence is MNFILAVFAIILLQAVRG. Over 19 to 358 the chain is Extracellular; it reads EIDNAIVGDP…ELCMTAIGTT (340 aa). The ZP domain occupies 46 to 291; the sequence is SCVGNFIIKV…DYCDVPSCPD (246 aa). Residues Asn90 and Asn307 are each glycosylated (N-linked (GlcNAc...) asparagine). The helical transmembrane segment at 359–379 threads the bilayer; that stretch reads LLVFLNAFLFIISLVSIVHVC. The Cytoplasmic segment spans residues 380–395; that stretch reads CFRTSPKLEKTKSTML.

Its subcellular location is the cell membrane. In terms of biological role, plays a role in alae formation in L1 and dauer stage larvae. The polypeptide is Cuticlin-5 (Caenorhabditis elegans).